Consider the following 777-residue polypeptide: Endonuclease MutS2 (777 aa).

Residue Gly-328–Thr-335 participates in ATP binding. The 76-residue stretch at Leu-702–Lys-777 folds into the Smr domain.

The protein belongs to the DNA mismatch repair MutS family. MutS2 subfamily. In terms of assembly, homodimer. Binds to stalled ribosomes, contacting rRNA.

Functionally, endonuclease that is involved in the suppression of homologous recombination and thus may have a key role in the control of bacterial genetic diversity. In terms of biological role, acts as a ribosome collision sensor, splitting the ribosome into its 2 subunits. Detects stalled/collided 70S ribosomes which it binds and splits by an ATP-hydrolysis driven conformational change. Acts upstream of the ribosome quality control system (RQC), a ribosome-associated complex that mediates the extraction of incompletely synthesized nascent chains from stalled ribosomes and their subsequent degradation. Probably generates substrates for RQC. The polypeptide is Endonuclease MutS2 (Streptococcus sanguinis (strain SK36)).